Consider the following 84-residue polypeptide: Small ribosomal subunit protein uS17 (84 aa).

Belongs to the universal ribosomal protein uS17 family. Part of the 30S ribosomal subunit.

Functionally, one of the primary rRNA binding proteins, it binds specifically to the 5'-end of 16S ribosomal RNA. The chain is Small ribosomal subunit protein uS17 from Actinobacillus pleuropneumoniae serotype 5b (strain L20).